Consider the following 342-residue polypeptide: Flagellar P-ring protein (342 aa).

The first 19 residues, 1–19, serve as a signal peptide directing secretion; the sequence is MKRVFLWLIFVLAFHKLLA.

The protein belongs to the FlgI family. As to quaternary structure, the basal body constitutes a major portion of the flagellar organelle and consists of four rings (L,P,S, and M) mounted on a central rod.

The protein resides in the periplasm. It is found in the bacterial flagellum basal body. In terms of biological role, assembles around the rod to form the L-ring and probably protects the motor/basal body from shearing forces during rotation. This Helicobacter pylori (strain P12) protein is Flagellar P-ring protein.